A 344-amino-acid polypeptide reads, in one-letter code: Methionine aminopeptidase 1C, chloroplastic/mitochondrial (344 aa).

His-172 serves as a coordination point for substrate. A divalent metal cation is bound by residues Asp-189, Asp-200, and His-262. His-269 is a substrate binding site. A divalent metal cation-binding residues include Glu-296 and Glu-327.

Belongs to the peptidase M24A family. Methionine aminopeptidase type 1 subfamily. It depends on Co(2+) as a cofactor. The cofactor is Zn(2+). Mn(2+) is required as a cofactor. Fe(2+) serves as cofactor. Ubiquitous.

Its subcellular location is the plastid. It localises to the chloroplast. The protein localises to the mitochondrion. The catalysed reaction is Release of N-terminal amino acids, preferentially methionine, from peptides and arylamides.. Removes the N-terminal methionine from nascent proteins. The N-terminal methionine is often cleaved when the second residue in the primary sequence is small and uncharged (Met-Ala-, Cys, Gly, Pro, Ser, Thr, or Val). The protein is Methionine aminopeptidase 1C, chloroplastic/mitochondrial (MAP1C) of Arabidopsis thaliana (Mouse-ear cress).